Reading from the N-terminus, the 793-residue chain is Acetyl-CoA decarbonylase/synthase complex subunit alpha (793 aa).

Cys-55, Cys-58, Cys-63, and Cys-73 together coordinate [4Fe-4S] cluster. A CO-binding site is contributed by His-96. His-229, Cys-257, and Cys-309 together coordinate [Ni-4Fe-4S] cluster. 4Fe-4S ferredoxin-type domains lie at 393 to 422 (EQQF…ISEM) and 432 to 461 (EPFS…LKLY). [4Fe-4S] cluster contacts are provided by Cys-403, Cys-406, Cys-409, Cys-413, Cys-441, Cys-444, Cys-447, and Cys-451. [Ni-4Fe-4S] cluster contacts are provided by Cys-509, Cys-538, and Cys-573.

Belongs to the Ni-containing carbon monoxide dehydrogenase family. As to quaternary structure, heterotetramer of two alpha and two epsilon subunits. The ACDS complex is made up of alpha, epsilon, beta, gamma and delta subunits with a probable stoichiometry of (alpha(2)epsilon(2))(4)-beta(8)-(gamma(1)delta(1))(8). Requires [4Fe-4S] cluster as cofactor. The cofactor is [Ni-4Fe-4S] cluster.

The catalysed reaction is CO + 2 oxidized [2Fe-2S]-[ferredoxin] + H2O = 2 reduced [2Fe-2S]-[ferredoxin] + CO2 + 2 H(+). Functionally, part of the ACDS complex that catalyzes the reversible cleavage of acetyl-CoA, allowing autotrophic growth from CO(2). The alpha-epsilon subcomponent functions as a carbon monoxide dehydrogenase. The sequence is that of Acetyl-CoA decarbonylase/synthase complex subunit alpha from Methanothrix soehngenii (Methanosaeta concilii).